Here is a 406-residue protein sequence, read N- to C-terminus: MLYPRNLALFSLLSLSSAAPSQVERSPDAVLKPRAVCTPTAGGSPSIDDVPAIRKAIASCGNGGTIVFPAGSTYYLNSVLDLAGCSNCDIQVEGVLKFSGSTEYWGGKTAMLNIDMINGLRLRSLTGSGVIDGNGQNAYDRFASDKNYKRPTLLYITGGSNIEVSGLRQKNPPNVFNSVKGDTQHVTFKNLRMDATSNSQNPPKNTDGFDIGASTHVTISSVSVTNDDDCVAFKPGSNYVTVEDVTCTGSHGISVGSLGKSGPDVVQNILAHRITMIESTKAAGIKTYPSGNGHGLSTVKNVTFSDFNVRGCDYAFQIESCYGESESYCESNPGNAILQGIVVKGFSGTTSGKYDPVVANLNCGARGTCDVSMSAFSVKAPSGKATVLCDNTPSSLGVSCTSGASG.

The N-terminal stretch at 1–18 is a signal peptide; sequence MLYPRNLALFSLLSLSSA. 4 PbH1 repeats span residues 183 to 213, 214 to 235, 237 to 257, and 299 to 320; these read TQHV…DIGA, STHV…AFKP, SNYV…SVGS, and VKNV…QIES. The Proton donor role is filled by aspartate 228. Residue histidine 251 is part of the active site. Asparagine 301 carries N-linked (GlcNAc...) asparagine glycosylation.

The protein belongs to the glycosyl hydrolase 28 family.

It localises to the secreted. Its function is as follows. Pectinolytic enzyme involved in the degradation of xylogalacturonan (xga), a galacturonan backbone heavily substituted with xylose, and which is one important component of the hairy regions of pectin. Activity requires a galacturonic acid backbone substituted with xylose. This Aspergillus fumigatus (strain ATCC MYA-4609 / CBS 101355 / FGSC A1100 / Af293) (Neosartorya fumigata) protein is Probable endo-xylogalacturonan hydrolase A (xghA).